The sequence spans 412 residues: Tyrosine--tRNA ligase (412 aa).

Tyr-38 serves as a coordination point for L-tyrosine. The short motif at 43-52 (CTANSLHIGS) is the 'HIGH' region element. Residues Tyr-170 and Gln-174 each contribute to the L-tyrosine site. The short motif at 230–234 (KMGKT) is the 'KMSKS' region element. Position 233 (Lys-233) interacts with ATP. The S4 RNA-binding domain occupies 343–409 (IPISKLLHMW…CGKKRRLKVV (67 aa)).

This sequence belongs to the class-I aminoacyl-tRNA synthetase family. TyrS type 1 subfamily. Homodimer.

The protein resides in the cytoplasm. The enzyme catalyses tRNA(Tyr) + L-tyrosine + ATP = L-tyrosyl-tRNA(Tyr) + AMP + diphosphate + H(+). Functionally, catalyzes the attachment of tyrosine to tRNA(Tyr) in a two-step reaction: tyrosine is first activated by ATP to form Tyr-AMP and then transferred to the acceptor end of tRNA(Tyr). The polypeptide is Tyrosine--tRNA ligase (Anaplasma phagocytophilum (strain HZ)).